A 352-amino-acid chain; its full sequence is Gap junction alpha-4 protein (352 aa).

At Gly-2 to Lys-23 the chain is on the cytoplasmic side. A helical membrane pass occupies residues Ile-24–Gly-46. At Asp-47 to Arg-76 the chain is on the extracellular side. Residues Tyr-77–Leu-99 traverse the membrane as a helical segment. The Cytoplasmic portion of the chain corresponds to Ser-100–Thr-153. A helical transmembrane segment spans residues Tyr-154–Tyr-176. Residues Gly-177 to Phe-208 are Extracellular-facing. A helical membrane pass occupies residues Ile-209 to Val-231. The Cytoplasmic portion of the chain corresponds to Cys-232–Val-352. A disordered region spans residues Lys-330–Val-352. The segment covering Thr-340–Val-352 has biased composition (polar residues).

It belongs to the connexin family. Alpha-type (group II) subfamily. In terms of assembly, a connexon is composed of a hexamer of connexins.

The protein localises to the cell membrane. Its subcellular location is the cell junction. It localises to the gap junction. Functionally, one gap junction consists of a cluster of closely packed pairs of transmembrane channels, the connexons, through which materials of low MW diffuse from one cell to a neighboring cell. The chain is Gap junction alpha-4 protein (gja4) from Xenopus tropicalis (Western clawed frog).